Reading from the N-terminus, the 310-residue chain is Protein-L-isoaspartate O-methyltransferase (310 aa).

Disordered regions lie at residues 1–46 and 60–79; these read MSGE…DKPA and ALPG…TVLK. Over residues 14-34 the composition is skewed to basic and acidic residues; sequence EDLKRAPRKSEVRSGSGERHA. A compositionally biased stretch (low complexity) spans 35–46; it reads ASAVPKAADKPA. Ser157 is a catalytic residue.

This sequence belongs to the methyltransferase superfamily. L-isoaspartyl/D-aspartyl protein methyltransferase family.

Its subcellular location is the cytoplasm. It carries out the reaction [protein]-L-isoaspartate + S-adenosyl-L-methionine = [protein]-L-isoaspartate alpha-methyl ester + S-adenosyl-L-homocysteine. Its function is as follows. Catalyzes the methyl esterification of L-isoaspartyl residues in peptides and proteins that result from spontaneous decomposition of normal L-aspartyl and L-asparaginyl residues. It plays a role in the repair and/or degradation of damaged proteins. The sequence is that of Protein-L-isoaspartate O-methyltransferase from Burkholderia ambifaria (strain ATCC BAA-244 / DSM 16087 / CCUG 44356 / LMG 19182 / AMMD) (Burkholderia cepacia (strain AMMD)).